The primary structure comprises 218 residues: Ribulose-phosphate 3-epimerase (218 aa).

Ser10 contributes to the substrate binding site. A divalent metal cation is bound by residues His35, Asp37, and His68. The active-site Proton acceptor is Asp37. Substrate-binding positions include His68, 144–147, 177–179, and 199–200; these read GFSG, DGG, and GS. Asp177 provides a ligand contact to a divalent metal cation. Asp177 (proton donor) is an active-site residue.

The protein belongs to the ribulose-phosphate 3-epimerase family. A divalent metal cation is required as a cofactor.

The catalysed reaction is D-ribulose 5-phosphate = D-xylulose 5-phosphate. It participates in carbohydrate degradation. In terms of biological role, catalyzes the reversible epimerization of D-ribulose 5-phosphate to D-xylulose 5-phosphate. The protein is Ribulose-phosphate 3-epimerase of Treponema pallidum (strain Nichols).